The sequence spans 432 residues: Trigger factor (432 aa).

Positions 162-247 (GDLVKFDYQG…VKEVQAPVLP (86 aa)) constitute a PPIase FKBP-type domain.

It belongs to the FKBP-type PPIase family. Tig subfamily.

It localises to the cytoplasm. The enzyme catalyses [protein]-peptidylproline (omega=180) = [protein]-peptidylproline (omega=0). In terms of biological role, involved in protein export. Acts as a chaperone by maintaining the newly synthesized protein in an open conformation. Functions as a peptidyl-prolyl cis-trans isomerase. The protein is Trigger factor of Thiobacillus denitrificans (strain ATCC 25259 / T1).